We begin with the raw amino-acid sequence, 374 residues long: Phosphate-binding protein PstS 1 (374 aa).

Residues 1 to 23 form the signal peptide; the sequence is MKIRLHTLLAVLTAAPLLLAAAG. C24 carries N-palmitoyl cysteine lipidation. C24 is lipidated: S-diacylglycerol cysteine. The disordered stretch occupies residues 25-48; the sequence is GSKPPSGSPETGAGAGTVATTPAS. Phosphate is bound by residues 58 to 60, S88, D106, and 189 to 191; these read STL and SGD.

It belongs to the PstS family. The complex is composed of two ATP-binding proteins (PstB), two transmembrane proteins (PstC and PstA) and a solute-binding protein (PstS).

It is found in the cell membrane. Functionally, part of the ABC transporter complex PstSACB involved in phosphate import. This Mycobacterium tuberculosis (strain CDC 1551 / Oshkosh) protein is Phosphate-binding protein PstS 1 (pstS1).